The chain runs to 43 residues: Protein PsbN (43 aa).

A helical transmembrane segment spans residues Gly-4–Tyr-24.

Belongs to the PsbN family.

It is found in the plastid. It localises to the chloroplast thylakoid membrane. Its function is as follows. May play a role in photosystem I and II biogenesis. This chain is Protein PsbN, found in Coleochaete orbicularis (Charophycean green alga).